The sequence spans 201 residues: Small ribosomal subunit protein uS4c (201 aa).

The span at 1-14 (MSRYRGPRFKKIRR) shows a compositional bias: basic residues. Residues 1-44 (MSRYRGPRFKKIRRLGALPGLTSKRPRAGSDPRNQSRSGKKSQY) are disordered. Residues 89–152 (MRLDNTLFRL…NSRTLVQNLL (64 aa)) enclose the S4 RNA-binding domain.

This sequence belongs to the universal ribosomal protein uS4 family. In terms of assembly, part of the 30S ribosomal subunit. Contacts protein S5. The interaction surface between S4 and S5 is involved in control of translational fidelity.

It is found in the plastid. Its subcellular location is the chloroplast. In terms of biological role, one of the primary rRNA binding proteins, it binds directly to 16S rRNA where it nucleates assembly of the body of the 30S subunit. Its function is as follows. With S5 and S12 plays an important role in translational accuracy. The polypeptide is Small ribosomal subunit protein uS4c (rps4) (Draba nemorosa (Woodland whitlowgrass)).